The chain runs to 209 residues: Outer-membrane lipoprotein carrier protein (209 aa).

The N-terminal stretch at 1–21 (MHRQLRYAVLATALFASTAFA) is a signal peptide.

It belongs to the LolA family. In terms of assembly, monomer.

It is found in the periplasm. In terms of biological role, participates in the translocation of lipoproteins from the inner membrane to the outer membrane. Only forms a complex with a lipoprotein if the residue after the N-terminal Cys is not an aspartate (The Asp acts as a targeting signal to indicate that the lipoprotein should stay in the inner membrane). The sequence is that of Outer-membrane lipoprotein carrier protein from Xanthomonas oryzae pv. oryzae (strain MAFF 311018).